The chain runs to 156 residues: Arginine repressor (156 aa).

This sequence belongs to the ArgR family.

It is found in the cytoplasm. The protein operates within amino-acid biosynthesis; L-arginine biosynthesis [regulation]. Regulates arginine biosynthesis genes. The polypeptide is Arginine repressor (Proteus mirabilis (strain HI4320)).